The following is a 963-amino-acid chain: Spliceosome associated factor 3, U4/U6 recycling protein (963 aa).

The span at 1–11 shows a compositional bias: low complexity; the sequence is MATAAATSASE. Disordered regions lie at residues 1-36 and 49-86; these read MATAAATSASEPEAESKAGPKADGEEDEVKAARTRR and KTMGPGWDQQEEGVSESDGDEYAMASSAESSPGEYEWE. At Ala-2 the chain carries N-acetylalanine. The mediates interaction with PRPF3 stretch occupies residues 2–351; sequence ATAAATSASE…LVPDLWIRYS (350 aa). A phosphoserine mark is found at Ser-10 and Ser-16. Residues 14-23 show a composition bias toward basic and acidic residues; the sequence is AESKAGPKAD. A coiled-coil region spans residues 21 to 46; the sequence is KADGEEDEVKAARTRRKVLSRAVAAA. A compositionally biased stretch (acidic residues) spans 57–69; it reads QQEEGVSESDGDE. A coiled-coil region spans residues 82–110; that stretch reads EYEWEYDEEEEKNQLEIERLEEQLSINVY. HAT repeat units follow at residues 126 to 158, 164 to 195, 201 to 237, 242 to 275, 324 to 356, 359 to 391, 394 to 430, and 487 to 520; these read GELTKVRMARQKMSEIFPLTEELWLEWLHDEIS, LDREHVYDLFEKAVKDYICPNIWLEYGQYSVG, GGLEKVRSVFERALSSVGLHMSKGLALWEAYREFESA, ARLEKVHSLFRRQLAIPLYDMEATFAEYEEWSED, GDPARIQLIFERALVENCLVPDLWIRYSQYLDR, KVKDLVLSVHNRAIRNCPWTVALWSRYLLAMER, VDHQVISVTFEKALNAGFIQATDYVEIWQAYLDYLRR, and NNMQKARELWDSIMTRGNAKYANMWLEYYNLERA. Phosphoserine is present on Ser-215. A required for interaction with USP4 region spans residues 487–520; sequence NNMQKARELWDSIMTRGNAKYANMWLEYYNLERA. Positions 537–953 are necessary and sufficient for U6 snRNA binding; that stretch reads CTSDYPEHVC…AATEAPKMSN (417 aa). Residues 559 to 619 adopt a coiled-coil conformation; that stretch reads LEDWDIAVQK…ALKKKKKIRG (61 aa). Positions 600-670 are required for nuclear localization; sequence QRKRARAEKK…EVAPGPAGKC (71 aa). A Nuclear localization signal motif is present at residues 601–608; the sequence is RKRARAEK. Residues 608 to 619 are compositionally biased toward basic and acidic residues; that stretch reads KKALKKKKKIRG. Residues 608–712 form a disordered region; it reads KKALKKKKKI…SITVFVSNLP (105 aa). The span at 620–635 shows a compositional bias: basic residues; it reads PEKRGADEDDEKEWGD. Residues 644 to 657 show a composition bias toward acidic residues; that stretch reads RRRVENSIPAAGET. Ser-650 carries the post-translational modification Phosphoserine. Residue Thr-657 is modified to Phosphothreonine. Residues 695–712 are compositionally biased toward basic and acidic residues; that stretch reads VLHDSSKDSITVFVSNLP. The RRM 1 domain maps to 704 to 782; it reads ITVFVSNLPY…RPMFVSPCVD (79 aa). Phosphoserine is present on residues Ser-769, Ser-795, and Ser-852. Positions 801–878 constitute an RRM 2 domain; sequence HKLFISGLPF…NVIKVAISNP (78 aa). Residues 900-909 show a composition bias toward basic and acidic residues; sequence PQTYGARGKG. Position 906 is an omega-N-methylarginine (Arg-906).

Component of the 7SK snRNP complex at least composed of P-TEFb (composed of CDK9 and CCNT1/cyclin-T1), HEXIM1, HEXIM2, BCDIN3, SART3 proteins and 7SK and U6 snRNAs. Interacts with AGO1 and AGO2. Interacts with PRPF3 and USP4; the interaction with PRPF3 is direct and recruits USP4 to its substrate PRPF3. Interacts with USP15; the interaction is direct.

Its subcellular location is the nucleus. It localises to the nucleoplasm. The protein localises to the cajal body. It is found in the nucleus speckle. The protein resides in the cytoplasm. Functionally, U6 snRNP-binding protein that functions as a recycling factor of the splicing machinery. Promotes the initial reassembly of U4 and U6 snRNPs following their ejection from the spliceosome during its maturation. Also binds U6atac snRNPs and may function as a recycling factor for U4atac/U6atac spliceosomal snRNP, an initial step in the assembly of U12-type spliceosomal complex. The U12-type spliceosomal complex plays a role in the splicing of introns with non-canonical splice sites. May also function as a substrate-targeting factor for deubiquitinases like USP4 and USP15. Recruits USP4 to ubiquitinated PRPF3 within the U4/U5/U6 tri-snRNP complex, promoting PRPF3 deubiquitination and thereby regulating the spliceosome U4/U5/U6 tri-snRNP spliceosomal complex disassembly. May also recruit the deubiquitinase USP15 to histone H2B and mediate histone deubiquitination, thereby regulating gene expression and/or DNA repair. May play a role in hematopoiesis probably through transcription regulation of specific genes including MYC. The protein is Spliceosome associated factor 3, U4/U6 recycling protein of Pongo abelii (Sumatran orangutan).